A 396-amino-acid polypeptide reads, in one-letter code: Lipopolysaccharide assembly protein B (396 aa).

A helical membrane pass occupies residues Met1–Gly20. The Cytoplasmic portion of the chain corresponds to Arg21–Asn396. TPR repeat units follow at residues Leu35 to Glu68, Phe77 to Tyr109, Glu149 to Glu182, and Val221 to Tyr254. 4 residues coordinate Fe cation: Cys364, Cys367, Cys378, and Cys381.

It belongs to the LapB family.

The protein resides in the cell inner membrane. Its function is as follows. Modulates cellular lipopolysaccharide (LPS) levels by regulating LpxC, which is involved in lipid A biosynthesis. May act by modulating the proteolytic activity of FtsH towards LpxC. May also coordinate assembly of proteins involved in LPS synthesis at the plasma membrane. The polypeptide is Lipopolysaccharide assembly protein B (Haemophilus influenzae (strain ATCC 51907 / DSM 11121 / KW20 / Rd)).